The primary structure comprises 221 residues: Iron-sulfur cluster repair protein YtfE (221 aa).

The protein belongs to the RIC family. YtfE subfamily. In terms of assembly, homodimer.

It is found in the cytoplasm. Di-iron-containing protein involved in the repair of iron-sulfur clusters damaged by oxidative and nitrosative stress conditions. In Yersinia pseudotuberculosis serotype IB (strain PB1/+), this protein is Iron-sulfur cluster repair protein YtfE.